The sequence spans 590 residues: Ankyrin repeat-containing protein ITN1 (590 aa).

A disordered region spans residues 25–44; the sequence is ENQNPMIDPSPTPSPSATAT. ANK repeat units lie at residues 73–102, 128–157, 163–192, 197–226, 231–260, 265–294, and 299–329; these read HNDT…SQME, LGET…RESI, SGYD…TLSQ, SNAT…NLLE, NNKN…QLAR, KGQT…AIVM, and SCNT…NANT. 4 helical membrane passes run 422–442, 460–480, 500–520, and 531–551; these read VTVV…TVPG, IFFI…VVQI, LMWL…YIVV, and VTVV…YYVV.

Interacts with REM19/RTV1. In terms of tissue distribution, expressed in roots, shoots, leaf vasculature and stems.

Its subcellular location is the cell membrane. In terms of biological role, involved in salt stress tolerance. May act through abscisic acid (ABA) signaling pathways and promote reactive oxygen species (ROS) production. The sequence is that of Ankyrin repeat-containing protein ITN1 from Arabidopsis thaliana (Mouse-ear cress).